The following is a 281-amino-acid chain: NADPH-dependent 7-cyano-7-deazaguanine reductase (281 aa).

Residue 87 to 89 (IES) participates in substrate binding. 89 to 90 (SK) contacts NADPH. Cys-188 acts as the Thioimide intermediate in catalysis. Asp-195 serves as the catalytic Proton donor. Residue 227–228 (HE) participates in substrate binding. An NADPH-binding site is contributed by 256 to 257 (RG).

Belongs to the GTP cyclohydrolase I family. QueF type 2 subfamily. Homodimer.

It localises to the cytoplasm. The catalysed reaction is 7-aminomethyl-7-carbaguanine + 2 NADP(+) = 7-cyano-7-deazaguanine + 2 NADPH + 3 H(+). It participates in tRNA modification; tRNA-queuosine biosynthesis. Its function is as follows. Catalyzes the NADPH-dependent reduction of 7-cyano-7-deazaguanine (preQ0) to 7-aminomethyl-7-deazaguanine (preQ1). The sequence is that of NADPH-dependent 7-cyano-7-deazaguanine reductase from Photobacterium profundum (strain SS9).